A 610-amino-acid chain; its full sequence is Elongation factor 4 (610 aa).

Positions 12–194 (EKIRNFSIIA…QIVEKVPAPQ (183 aa)) constitute a tr-type G domain. GTP-binding positions include 24–29 (DHGKST) and 141–144 (NKID).

The protein belongs to the TRAFAC class translation factor GTPase superfamily. Classic translation factor GTPase family. LepA subfamily.

The protein resides in the cell membrane. It carries out the reaction GTP + H2O = GDP + phosphate + H(+). Its function is as follows. Required for accurate and efficient protein synthesis under certain stress conditions. May act as a fidelity factor of the translation reaction, by catalyzing a one-codon backward translocation of tRNAs on improperly translocated ribosomes. Back-translocation proceeds from a post-translocation (POST) complex to a pre-translocation (PRE) complex, thus giving elongation factor G a second chance to translocate the tRNAs correctly. Binds to ribosomes in a GTP-dependent manner. The polypeptide is Elongation factor 4 (Streptococcus thermophilus (strain CNRZ 1066)).